We begin with the raw amino-acid sequence, 371 residues long: Bifunctional enzyme IspD/IspF (371 aa).

Residues 1–210 (MSEMSLIMLA…LDLPTPSFEI (210 aa)) are 2-C-methyl-D-erythritol 4-phosphate cytidylyltransferase. Residues 211-371 (FTGNGFDVHE…NLKYFDWTRL (161 aa)) form a 2-C-methyl-D-erythritol 2,4-cyclodiphosphate synthase region. A divalent metal cation contacts are provided by D217 and H219. 4-CDP-2-C-methyl-D-erythritol 2-phosphate contacts are provided by residues 217 to 219 (DVH) and 243 to 244 (HS). H251 is a binding site for a divalent metal cation. Residues 265–267 (DIG), 270–274 (YPDTD), 309–315 (AQSPKLK), 341–344 (TTTE), F348, and R351 each bind 4-CDP-2-C-methyl-D-erythritol 2-phosphate.

In the N-terminal section; belongs to the IspD/TarI cytidylyltransferase family. IspD subfamily. This sequence in the C-terminal section; belongs to the IspF family. A divalent metal cation is required as a cofactor.

It carries out the reaction 2-C-methyl-D-erythritol 4-phosphate + CTP + H(+) = 4-CDP-2-C-methyl-D-erythritol + diphosphate. The catalysed reaction is 4-CDP-2-C-methyl-D-erythritol 2-phosphate = 2-C-methyl-D-erythritol 2,4-cyclic diphosphate + CMP. The protein operates within isoprenoid biosynthesis; isopentenyl diphosphate biosynthesis via DXP pathway; isopentenyl diphosphate from 1-deoxy-D-xylulose 5-phosphate: step 2/6. It functions in the pathway isoprenoid biosynthesis; isopentenyl diphosphate biosynthesis via DXP pathway; isopentenyl diphosphate from 1-deoxy-D-xylulose 5-phosphate: step 4/6. Functionally, bifunctional enzyme that catalyzes the formation of 4-diphosphocytidyl-2-C-methyl-D-erythritol from CTP and 2-C-methyl-D-erythritol 4-phosphate (MEP) (IspD), and catalyzes the conversion of 4-diphosphocytidyl-2-C-methyl-D-erythritol 2-phosphate (CDP-ME2P) to 2-C-methyl-D-erythritol 2,4-cyclodiphosphate (ME-CPP) with a corresponding release of cytidine 5-monophosphate (CMP) (IspF). The sequence is that of Bifunctional enzyme IspD/IspF from Campylobacter jejuni subsp. jejuni serotype O:2 (strain ATCC 700819 / NCTC 11168).